Reading from the N-terminus, the 233-residue chain is Lipoprotein-releasing system ATP-binding protein LolD (233 aa).

The region spanning 6–233 (LQCDNLCKRY…TAELSLMGAE (228 aa)) is the ABC transporter domain. 42–49 (GSSGSGKS) lines the ATP pocket.

It belongs to the ABC transporter superfamily. Lipoprotein translocase (TC 3.A.1.125) family. In terms of assembly, the complex is composed of two ATP-binding proteins (LolD) and two transmembrane proteins (LolC and LolE).

The protein localises to the cell inner membrane. In terms of biological role, part of the ABC transporter complex LolCDE involved in the translocation of mature outer membrane-directed lipoproteins, from the inner membrane to the periplasmic chaperone, LolA. Responsible for the formation of the LolA-lipoprotein complex in an ATP-dependent manner. This Salmonella choleraesuis (strain SC-B67) protein is Lipoprotein-releasing system ATP-binding protein LolD.